Reading from the N-terminus, the 196-residue chain is Imidazoleglycerol-phosphate dehydratase (196 aa).

Belongs to the imidazoleglycerol-phosphate dehydratase family.

Its subcellular location is the cytoplasm. It carries out the reaction D-erythro-1-(imidazol-4-yl)glycerol 3-phosphate = 3-(imidazol-4-yl)-2-oxopropyl phosphate + H2O. Its pathway is amino-acid biosynthesis; L-histidine biosynthesis; L-histidine from 5-phospho-alpha-D-ribose 1-diphosphate: step 6/9. This Desulfitobacterium hafniense (strain Y51) protein is Imidazoleglycerol-phosphate dehydratase.